The primary structure comprises 268 residues: Orotidine 5'-phosphate decarboxylase (268 aa).

Residues aspartate 38, 60–62, 92–101, tyrosine 218, and arginine 236 each bind substrate; these read KTH and DRKFADIGNT. Residue lysine 94 is the Proton donor of the active site.

It belongs to the OMP decarboxylase family.

It carries out the reaction orotidine 5'-phosphate + H(+) = UMP + CO2. It participates in pyrimidine metabolism; UMP biosynthesis via de novo pathway; UMP from orotate: step 2/2. This Candida parapsilosis (Yeast) protein is Orotidine 5'-phosphate decarboxylase (URA3).